The primary structure comprises 130 residues: Small ribosomal subunit protein uS8 (130 aa).

Belongs to the universal ribosomal protein uS8 family. Part of the 30S ribosomal subunit. Contacts proteins S5 and S12.

In terms of biological role, one of the primary rRNA binding proteins, it binds directly to 16S rRNA central domain where it helps coordinate assembly of the platform of the 30S subunit. The polypeptide is Small ribosomal subunit protein uS8 (Acidiphilium cryptum (strain JF-5)).